The sequence spans 398 residues: Argininosuccinate lyase (398 aa).

The protein belongs to the lyase 1 family. Argininosuccinate lyase subfamily.

Its subcellular location is the cytoplasm. It carries out the reaction 2-(N(omega)-L-arginino)succinate = fumarate + L-arginine. The protein operates within amino-acid biosynthesis; L-arginine biosynthesis; L-arginine from L-ornithine and carbamoyl phosphate: step 3/3. This is Argininosuccinate lyase from Thermotoga neapolitana (strain ATCC 49049 / DSM 4359 / NBRC 107923 / NS-E).